Reading from the N-terminus, the 496-residue chain is Probable malate:quinone oxidoreductase (496 aa).

It belongs to the MQO family. FAD serves as cofactor.

The catalysed reaction is (S)-malate + a quinone = a quinol + oxaloacetate. It functions in the pathway carbohydrate metabolism; tricarboxylic acid cycle; oxaloacetate from (S)-malate (quinone route): step 1/1. The sequence is that of Probable malate:quinone oxidoreductase from Prochlorococcus marinus (strain MIT 9303).